The following is a 440-amino-acid chain: Histidinol dehydrogenase (440 aa).

3 residues coordinate NAD(+): Tyr-133, Gln-194, and Asn-217. Residues Ser-240, Gln-262, and His-265 each coordinate substrate. Positions 262 and 265 each coordinate Zn(2+). Catalysis depends on proton acceptor residues Glu-330 and His-331. Substrate-binding residues include His-331, Asp-364, Glu-418, and His-423. Asp-364 provides a ligand contact to Zn(2+). His-423 contacts Zn(2+).

This sequence belongs to the histidinol dehydrogenase family. The cofactor is Zn(2+).

The catalysed reaction is L-histidinol + 2 NAD(+) + H2O = L-histidine + 2 NADH + 3 H(+). Its pathway is amino-acid biosynthesis; L-histidine biosynthesis; L-histidine from 5-phospho-alpha-D-ribose 1-diphosphate: step 9/9. In terms of biological role, catalyzes the sequential NAD-dependent oxidations of L-histidinol to L-histidinaldehyde and then to L-histidine. This is Histidinol dehydrogenase from Nitrosospira multiformis (strain ATCC 25196 / NCIMB 11849 / C 71).